A 425-amino-acid chain; its full sequence is Palmitoyltransferase ZDHHC23 (425 aa).

Topologically, residues 1-81 (MKPVKKKKTE…RIPWLRGAKK (81 aa)) are cytoplasmic. Residues 82–99 (VNISIVPPLVLLPVFLHV) form a helical membrane-spanning segment. The Lumenal portion of the chain corresponds to 100–102 (ASW). Residues 103–125 (HFLLGVVVLTSLPMLALWYYYLT) traverse the membrane as a helical segment. The Cytoplasmic segment spans residues 126-130 (HRRKE). The chain crosses the membrane as a helical span at residues 131 to 151 (QTLFFLSLGLFSLGYMYYVFL). The Lumenal portion of the chain corresponds to 152–159 (REVVPQGR). Residues 160–180 (VGPTQLALLTCGLLLILLALY) form a helical membrane-spanning segment. At 181–292 (RAKKNPGYLS…NSCVGESNHQ (112 aa)) the chain is on the cytoplasmic side. One can recognise a DHHC domain in the interval 249–299 (DWCAKCQLVRPARAWHCRICGICVRRMDHHCVWINSCVGESNHQAFILALS). Cys-279 (S-palmitoyl cysteine intermediate) is an active-site residue. A helical transmembrane segment spans residues 293-313 (AFILALSIFLLTSVYGISLTL). Residues 314 to 343 (NTICRDRSLFTALFYCPGVYANYSSALSFT) are Lumenal-facing. The chain crosses the membrane as a helical span at residues 344-364 (CVWYSVIITAGMAYIFLIQLI). Topologically, residues 365-425 (NISYNVTERE…TVHTPAEDIV (61 aa)) are cytoplasmic. Positions 422–425 (EDIV) are interaction with NOS1.

The protein belongs to the DHHC palmitoyltransferase family. Interacts with NOS1. Expressed in the brain.

The protein resides in the golgi apparatus membrane. It localises to the golgi apparatus. It is found in the trans-Golgi network membrane. The enzyme catalyses L-cysteinyl-[protein] + hexadecanoyl-CoA = S-hexadecanoyl-L-cysteinyl-[protein] + CoA. Functionally, palmitoyltransferase that could catalyze the addition of palmitate onto various protein substrates and be involved in a variety of cellular processes. Palmitoyltransferase that mediates palmitoylation of KCNMA1, regulating localization of KCNMA1 to the plasma membrane. May be involved in NOS1 regulation and targeting to the synaptic membrane. This chain is Palmitoyltransferase ZDHHC23, found in Mus musculus (Mouse).